Consider the following 337-residue polypeptide: S-adenosylmethionine:tRNA ribosyltransferase-isomerase (337 aa).

This sequence belongs to the QueA family. As to quaternary structure, monomer.

The protein localises to the cytoplasm. The catalysed reaction is 7-aminomethyl-7-carbaguanosine(34) in tRNA + S-adenosyl-L-methionine = epoxyqueuosine(34) in tRNA + adenine + L-methionine + 2 H(+). The protein operates within tRNA modification; tRNA-queuosine biosynthesis. In terms of biological role, transfers and isomerizes the ribose moiety from AdoMet to the 7-aminomethyl group of 7-deazaguanine (preQ1-tRNA) to give epoxyqueuosine (oQ-tRNA). The protein is S-adenosylmethionine:tRNA ribosyltransferase-isomerase of Legionella pneumophila (strain Lens).